The primary structure comprises 175 residues: Disulfide bond formation protein B (175 aa).

Residues 1 to 13 lie on the Cytoplasmic side of the membrane; sequence MSKLVTFSQQRSA. Residues 14 to 30 form a helical membrane-spanning segment; it reads WLILMFSALGLEASALY. The Periplasmic portion of the chain corresponds to 31–48; that stretch reads FQYVMLLDPCVMCIYIRV. The cysteines at positions 40 and 43 are disulfide-linked. A helical membrane pass occupies residues 49-64; it reads AVLGLILAGLVGSIAP. The Cytoplasmic segment spans residues 65–71; it reads RFWIVRF. Residues 72-89 traverse the membrane as a helical segment; it reads LGMSLWGVSSAWGAKLSF. The Periplasmic segment spans residues 90–144; that stretch reads ELYQMQANPSPFSTCSFYPEFPTWMPLDAWMPSIFMPTGMCSDIPWTMMSLSMTQ. Residues C104 and C130 are joined by a disulfide bond. Residues 145–163 traverse the membrane as a helical segment; that stretch reads WTLIAFVGYSIAFLLFIYP. The Cytoplasmic segment spans residues 164–175; it reads GLLYKKPTNPYS.

It belongs to the DsbB family.

The protein localises to the cell inner membrane. Required for disulfide bond formation in some periplasmic proteins. Acts by oxidizing the DsbA protein. This is Disulfide bond formation protein B from Shewanella denitrificans (strain OS217 / ATCC BAA-1090 / DSM 15013).